A 212-amino-acid polypeptide reads, in one-letter code: Thymidylate kinase (212 aa).

ATP is bound at residue 11–18 (GLEGAGKT).

The protein belongs to the thymidylate kinase family.

It catalyses the reaction dTMP + ATP = dTDP + ADP. Phosphorylation of dTMP to form dTDP in both de novo and salvage pathways of dTTP synthesis. The protein is Thymidylate kinase (tmk) of Buchnera aphidicola subsp. Acyrthosiphon pisum (strain APS) (Acyrthosiphon pisum symbiotic bacterium).